The following is a 117-amino-acid chain: Large ribosomal subunit protein bL20 (117 aa).

Belongs to the bacterial ribosomal protein bL20 family.

In terms of biological role, binds directly to 23S ribosomal RNA and is necessary for the in vitro assembly process of the 50S ribosomal subunit. It is not involved in the protein synthesizing functions of that subunit. The polypeptide is Large ribosomal subunit protein bL20 (Vibrio atlanticus (strain LGP32) (Vibrio splendidus (strain Mel32))).